We begin with the raw amino-acid sequence, 1154 residues long: Polyketide biosynthesis protein ThaF (1154 aa).

The tract at residues 330–714 (MHAFLFPGQG…TNGIAPAARV (385 aa)) is acyl transferase. The tract at residues 627–689 (SAVAASAPPR…PAPAPAPAPA (63 aa)) is disordered. Residues 641 to 672 (ADAQPPAASPARAATAASTMPPASASASASAP) show a composition bias toward low complexity. The segment covering 673–689 (APAPAPAPAPAPAPAPA) has biased composition (pro residues).

It in the N-terminal section; belongs to the FabD family.

Its subcellular location is the cytoplasm. It carries out the reaction holo-[ACP] + malonyl-CoA = malonyl-[ACP] + CoA. It participates in antibiotic biosynthesis. Involved in production of the polyketide antibiotic thailandamide. Probably has an acyl transferase activity and could also have a flavin mononucleotide-dependent oxidoreductase activity. This chain is Polyketide biosynthesis protein ThaF, found in Burkholderia thailandensis (strain ATCC 700388 / DSM 13276 / CCUG 48851 / CIP 106301 / E264).